The primary structure comprises 150 residues: MSDFARNRKALHDFDIEETYEAGIALTGPEVKSVREGRANLRESYVRVRNGEVFLVGAHISPYKNATNVPQEPTRDRKLLLHRKEIDRLAGKSQEERKTIIPLRLYPKNGLVKLEIAVASRKRQYDKRREIAKKTAQREIERAMKERLRR.

This sequence belongs to the SmpB family.

Its subcellular location is the cytoplasm. Its function is as follows. Required for rescue of stalled ribosomes mediated by trans-translation. Binds to transfer-messenger RNA (tmRNA), required for stable association of tmRNA with ribosomes. tmRNA and SmpB together mimic tRNA shape, replacing the anticodon stem-loop with SmpB. tmRNA is encoded by the ssrA gene; the 2 termini fold to resemble tRNA(Ala) and it encodes a 'tag peptide', a short internal open reading frame. During trans-translation Ala-aminoacylated tmRNA acts like a tRNA, entering the A-site of stalled ribosomes, displacing the stalled mRNA. The ribosome then switches to translate the ORF on the tmRNA; the nascent peptide is terminated with the 'tag peptide' encoded by the tmRNA and targeted for degradation. The ribosome is freed to recommence translation, which seems to be the essential function of trans-translation. The chain is SsrA-binding protein from Rubrobacter xylanophilus (strain DSM 9941 / JCM 11954 / NBRC 16129 / PRD-1).